A 296-amino-acid polypeptide reads, in one-letter code: Cbb3-type cytochrome c oxidase subunit CcoP (296 aa).

The Cytoplasmic portion of the chain corresponds to 1–31; the sequence is MAQNYKDELSGVETTGHEWDGLRELNNPLPK. Residues 32–52 traverse the membrane as a helical segment; that stretch reads WWLYLFYVCIAWAMVYYVFYP. At 53–296 the chain is on the periplasmic side; the sequence is AWPLGKTYTK…VYVHNLGGGK (244 aa). Cytochrome c domains follow at residues 108–200 and 207–293; these read FAMA…LSLN and GKVA…HNLG. Heme c-binding residues include Cys-121, Cys-124, His-125, Met-175, Cys-220, Cys-223, His-224, and Met-270.

The protein belongs to the CcoP / FixP family. As to quaternary structure, component of the cbb3-type cytochrome c oxidase at least composed of CcoN, CcoO, CcoQ and CcoP. Requires heme c as cofactor.

The protein resides in the cell inner membrane. The protein operates within energy metabolism; oxidative phosphorylation. C-type cytochrome. Part of the cbb3-type cytochrome c oxidase complex. CcoP subunit is required for transferring electrons from donor cytochrome c via its heme groups to CcoO subunit. From there, electrons are shuttled to the catalytic binuclear center of CcoN subunit where oxygen reduction takes place. The complex also functions as a proton pump. This Azospirillum sp. (strain B510) protein is Cbb3-type cytochrome c oxidase subunit CcoP.